A 354-amino-acid polypeptide reads, in one-letter code: Ribosomal RNA large subunit methyltransferase M (354 aa).

S-adenosyl-L-methionine is bound by residues serine 183, 216–219 (SPGG), aspartate 235, aspartate 255, and aspartate 271. Lysine 300 serves as the catalytic Proton acceptor.

It belongs to the class I-like SAM-binding methyltransferase superfamily. RNA methyltransferase RlmE family. RlmM subfamily. Monomer.

The protein localises to the cytoplasm. It carries out the reaction cytidine(2498) in 23S rRNA + S-adenosyl-L-methionine = 2'-O-methylcytidine(2498) in 23S rRNA + S-adenosyl-L-homocysteine + H(+). Functionally, catalyzes the 2'-O-methylation at nucleotide C2498 in 23S rRNA. The polypeptide is Ribosomal RNA large subunit methyltransferase M (Pseudomonas putida (strain ATCC 700007 / DSM 6899 / JCM 31910 / BCRC 17059 / LMG 24140 / F1)).